The sequence spans 63 residues: Large ribosomal subunit protein bL28 (63 aa).

This sequence belongs to the bacterial ribosomal protein bL28 family.

This chain is Large ribosomal subunit protein bL28 (rpmB), found in Selenomonas ruminantium.